The following is a 376-amino-acid chain: MEPENAQGKSPAENEQEVVPDVASAMSASSEALEFLCSVGLEELNLCLFTDSLATVSVSGVELGNFAVSVQPAYYQLDGLEEEKCFLVHAASQGTIDGVPCGTSIIGHISYKLETLEQHVHEYVKLKGHSLDKKTQIVRQGDKLVINRIITEGEKLHRETSSHSTSLLSGLISEAANLLIMRILARRKIKDPLKFLAFDEEGNLCTSTYAPLGSQAQVIGKEMVDVFGIERTIHSPEVPTTWQCFFLSDGHLASHVQIGSPVTIKLNEMPVLSEPDEKDPKPVFEKKPLAWQEDLQLHSEFLDRKEELISDHETYLRRHPEVKVLLADFMQFLLLRKPDDIMDFAAEYFKPFSSTQEPNDPFVSSHHASPFRNVSH.

The disordered stretch occupies residues 355–376 (TQEPNDPFVSSHHASPFRNVSH).

This sequence belongs to the CATIP family.

The protein localises to the nucleus. The protein resides in the cytoplasm. It localises to the cell membrane. Its subcellular location is the cytoskeleton. Plays a role in primary ciliogenesis by modulating actin polymerization. The sequence is that of Ciliogenesis-associated TTC17-interacting protein (catip) from Xenopus laevis (African clawed frog).